The following is an 80-amino-acid chain: MTHVLSAAANDLIACVLRDNLFSADGECLRYVVCKEAGHVESVYIGEIGAAQAHSGDQNAVLDASSASDVSSSASSRRVS.

The protein belongs to the baculoviridae LEF-10 family.

In terms of biological role, involved in late/very late gene activation. The chain is Late expression factor 10 (LEF-10) from Orgyia pseudotsugata multicapsid polyhedrosis virus (OpMNPV).